A 146-amino-acid polypeptide reads, in one-letter code: 3-dehydroquinate dehydratase (146 aa).

Tyr22 serves as the catalytic Proton acceptor. The substrate site is built by Asn73, His79, and Asp86. The Proton donor role is filled by His99. Substrate contacts are provided by residues 100–101 (LS) and Arg110.

Belongs to the type-II 3-dehydroquinase family. As to quaternary structure, homododecamer.

It catalyses the reaction 3-dehydroquinate = 3-dehydroshikimate + H2O. The protein operates within metabolic intermediate biosynthesis; chorismate biosynthesis; chorismate from D-erythrose 4-phosphate and phosphoenolpyruvate: step 3/7. Its function is as follows. Catalyzes a trans-dehydration via an enolate intermediate. In Synechococcus sp. (strain CC9902), this protein is 3-dehydroquinate dehydratase.